We begin with the raw amino-acid sequence, 362 residues long: Peptide chain release factor 1 (362 aa).

Gln-240 carries the N5-methylglutamine modification.

The protein belongs to the prokaryotic/mitochondrial release factor family. Methylated by PrmC. Methylation increases the termination efficiency of RF1.

Its subcellular location is the cytoplasm. Peptide chain release factor 1 directs the termination of translation in response to the peptide chain termination codons UAG and UAA. The protein is Peptide chain release factor 1 of Bifidobacterium longum (strain NCC 2705).